The sequence spans 154 residues: uncharacterized protein (154 aa).

Positions 1 to 143 (MTESERALLT…LRKLAGSLTK (143 aa)) constitute an HTH marR-type domain. Positions 57 to 80 (LSKLAMSLDLKPASVTRMTDILYK) form a DNA-binding region, H-T-H motif.

This is an uncharacterized protein from Bacillus subtilis (strain 168).